Here is a 154-residue protein sequence, read N- to C-terminus: Zinc finger HIT domain-containing protein 1 (154 aa).

Residues 1 to 72 form a disordered region; it reads MVEKKTSVRS…DTGKKKKKTR (72 aa). Basic and acidic residues predominate over residues 14–23; that stretch reads GQRRVLDRAA. The stretch at 23 to 39 forms a coiled coil; that stretch reads ARQRRINRQLEALENDN. The Nuclear localization signal signature appears at 38-47; that stretch reads DNFQDDPHAG. Residues 72–110 are interaction with NR1D2; the sequence is RGDHFKLRFRKNFQALLEEQNLSVAEGPNYLTACAGPPS. Thr103 carries the post-translational modification Phosphothreonine; by MAPK11 and MAPK14. Zn(2+) is bound by residues Cys117, Cys120, Cys128, Cys131, Cys136, Cys140, His144, and Cys149. The segment at 117–149 adopts an HIT-type zinc-finger fold; sequence CAVCGFPSPYTCVSCGARYCTVRCLGTHQETRC.

Belongs to the ZNHIT1 family. As to quaternary structure, component of the chromatin-remodeling SRCAP complex composed of at least SRCAP, DMAP1, RUVBL1, RUVBL2, ACTL6A, YEATS4, ACTR6 and ZNHIT1. Interacts with MAPK11 and MAPK14. Interacts with NR1D1 and NR2D2. Interacts (via HIT-type zinc finger) with the RUVBL1/RUVBL2 complex in the presence of ADP. Interacts with histone deacetylase HDAC1. Interacts with histone H2AZ1; the interaction results in recruitment of H2AZ1 to the MYOG promoter region. Interacts with PCID2; the interaction results in inhibition of SRCAP complex activity, preventing the deposition of histone variant H2Az1 to lymphoid fate regulator genes and restricting lymphoid lineage commitment. Phosphorylated on Thr by MAPK11 or MAPK14. Phosphorylation is required for MYOG induction, for deposition of histone H2AZ1 at the MYOG promoter and for SRCAP complex integrity.

It localises to the nucleus. Functionally, plays a role in chromatin remodeling by promoting the incorporation of histone variant H2AZ1/H2A.Z into the genome to regulate gene expression. Promotes SRCAP complex-mediated deposition of histone variant H2AZ1 to lymphoid fate regulator genes, enhancing lymphoid lineage commitment. Recruited to the promoter of the transcriptional activator MYOG at the early stages of muscle differentiation where it mediates binding of histone H2AZ1 to chromatin and induces muscle-specific gene expression. Maintains hematopoietic stem cell (HSC) quiescence by determining the chromatin accessibility at distal enhancers of HSC quiescence genes such as PTEN, FSTL1 and KLF4, enhancing deposition of H2AZ1 to promote their sustained transcription and restricting PI3K-AKT signaling inhibition. Plays a role in intestinal stem cell maintenance by promoting H2AZ1 deposition at the transcription start sites of genes involved in intestinal stem cell fate determination including LGR5, TGFB1 and TGFBR2, thereby contributing to gene transcription. Promotes phosphorylation of the H2AZ1 chaperone VPS72/YL1 which enhances the interaction between HZAZ1 and VPS72. Regulates the entry of male germ cells into meiosis by controlling histone H2AZ1 deposition which facilitates the expression of meiotic genes such as MEIOSIN, leading to the initiation of meiosis. Required for postnatal heart function through its role in maintenance of cardiac Ca(2+) homeostasis by modulating the expression of Ca(2+)-regulating proteins CASQ1 and ATP2A2/SERCA2A via deposition of histone H2AZ1 at their promoters. During embryonic heart development, required for mitochondrial maturation and oxidative metabolism by functioning through H2AZ1 deposition to activate transcription of metabolic genes and is also required to maintain the stability of the respiratory complex. In neural cells, increases deposition of the H2AZ1 histone variant and promotes neurite growth. Plays a role in TP53/p53-mediated apoptosis induction by stimulating the transcriptional activation of several proapoptotic p53 target genes such as PMAIP1/NOXA and BBC3/PUMA. Mediates cell cycle arrest induced in response to gamma-irradiation by enhancing recruitment of TP53/p53 to the promoter of the cell cycle inhibitor CDKN1A, leading to its transcriptional activation. Recruited to the promoter of cyclin-dependent kinase CDK6 and inhibits its transcription, possibly by decreasing the acetylation level of histone H4, leading to cell cycle arrest at the G1 phase. Plays a role in lens fiber cell differentiation by regulating the expression of cell cycle regulator CDKN1A/p21Cip1. Binds to transcriptional repressor NR1D2 and relieves it of its inhibitory effect on the transcription of apolipoprotein APOC3 without affecting its DNA-binding activity. This chain is Zinc finger HIT domain-containing protein 1 (ZNHIT1), found in Bos taurus (Bovine).